The following is a 1137-amino-acid chain: UDP-N-acetylglucosamine transferase subunit ALG13 (1137 aa).

A glycosyltransferase activity region spans residues methionine 1–cysteine 125. A deubiquitinase activity region spans residues threonine 126 to valine 400. One can recognise an OTU domain in the interval leucine 231–lysine 352. Aspartate 239 acts as the For deubiquitinase activity in catalysis. The active-site Nucleophile; for deubiquitinase activity is the cysteine 242. Catalysis depends on histidine 345, which acts as the For deubiquitinase activity. The Tudor domain occupies glutamine 492–proline 552. Disordered stretches follow at residues histidine 641–asparagine 660 and isoleucine 911–aspartate 974. Pro residues-rich tracts occupy residues leucine 918 to alanine 946 and glutamine 956 to serine 967.

It belongs to the glycosyltransferase 28 family. In terms of assembly, forms with ALG14 the active heterodimeric UDP-N-acetylglucosamine transferase complex. Not able to interact with ALG14 to form an active UDP-N-acetylglucosamine transferase complex.

It is found in the endoplasmic reticulum membrane. It carries out the reaction an N-acetyl-alpha-D-glucosaminyl-diphospho-di-trans,poly-cis-dolichol + UDP-N-acetyl-alpha-D-glucosamine = an N,N'-diacetylchitobiosyl-diphospho-di-trans,poly-cis-dolichol + UDP + H(+). Its pathway is protein modification; protein glycosylation. Its function is as follows. Catalytic subunit of the UDP-N-acetylglucosamine transferase complex that operates in the biosynthetic pathway of dolichol-linked oligosaccharides, the glycan precursors employed in protein asparagine (N)-glycosylation. The assembly of dolichol-linked oligosaccharides begins on the cytosolic side of the endoplasmic reticulum membrane and finishes in its lumen. The sequential addition of sugars to dolichol pyrophosphate produces dolichol-linked oligosaccharides containing fourteen sugars, including two GlcNAcs, nine mannoses and three glucoses. Once assembled, the oligosaccharide is transferred from the lipid to nascent proteins by oligosaccharyltransferases. On the cytoplasmic face of the endoplasmic reticulum, the dimeric ALG13/ALG14 complex catalyzes the second step of dolichol pyrophosphate biosynthesis, transferring a beta1,4-linked N-acetylglucosamine (GlcNAc) from UDP-GlcNAc to GlcNAc-pyrophosphatedolichol (Gn-PDol) to produce N,N'-diacetylchitobiosyl diphosphodolichol. N,N'-diacetylchitobiosyl diphosphodolichol is a substrate for ALG1, the following enzyme in the biosynthetic pathway. In terms of biological role, no glycosyltransferase or deubiquitinase activity is detected for this potential multifunctional enzyme. The protein is UDP-N-acetylglucosamine transferase subunit ALG13 of Homo sapiens (Human).